The chain runs to 319 residues: Cytochrome c biogenesis protein CcsA (319 aa).

The next 5 membrane-spanning stretches (helical) occupy residues 14-34, 46-66, 74-94, 97-117, and 142-162; these read AFAV…FPQW, AIAN…GGYF, SLFF…SISG, LVGV…ALSL, and VMML…ALLV. A disordered region spans residues 175–201; the sequence is SVGTGSFRSRRPEPSLEASTGNGGTTV. Residues 191-201 show a composition bias toward polar residues; sequence EASTGNGGTTV. Helical transmembrane passes span 227–247, 254–274, and 288–308; these read MIGL…VWAN, WSWD…AAYL, and AILA…VNLL.

The protein belongs to the CcmF/CycK/Ccl1/NrfE/CcsA family. As to quaternary structure, may interact with ccs1.

The protein resides in the cellular thylakoid membrane. In terms of biological role, required during biogenesis of c-type cytochromes (cytochrome c6 and cytochrome f) at the step of heme attachment. This chain is Cytochrome c biogenesis protein CcsA, found in Thermosynechococcus vestitus (strain NIES-2133 / IAM M-273 / BP-1).